A 237-amino-acid chain; its full sequence is rRNA-processing protein EFG1 (237 aa).

The tract at residues 1–24 is disordered; that stretch reads MPKTVKNPKNNKSRSRGAPIQVAE. Coiled coils occupy residues 53–113 and 166–186; these read DKKI…ISQT and LKITEERRREFRKYIEKLMEE. The interval 206–237 is disordered; that stretch reads NDKTQKAVLTEEIDAPEQKQDEQQEEQDDFFE. The span at 228–237 shows a compositional bias: acidic residues; it reads QQEEQDDFFE.

The protein belongs to the EFG1 family.

It localises to the nucleus. The protein localises to the nucleolus. Involved in rRNA processing. In Candida albicans (strain SC5314 / ATCC MYA-2876) (Yeast), this protein is rRNA-processing protein EFG1.